We begin with the raw amino-acid sequence, 393 residues long: Formate-dependent phosphoribosylglycinamide formyltransferase (393 aa).

N(1)-(5-phospho-beta-D-ribosyl)glycinamide-binding positions include Glu22–Leu23 and Glu82. ATP-binding positions include Arg114, Lys155, Ser160–Gln165, Glu195–Ile198, and Glu203. One can recognise an ATP-grasp domain in the interval Arg119–Leu308. The Mg(2+) site is built by Glu267 and Glu279. N(1)-(5-phospho-beta-D-ribosyl)glycinamide-binding positions include Asp286, Lys356, and Arg363 to Arg364.

It belongs to the PurK/PurT family. As to quaternary structure, homodimer.

The enzyme catalyses N(1)-(5-phospho-beta-D-ribosyl)glycinamide + formate + ATP = N(2)-formyl-N(1)-(5-phospho-beta-D-ribosyl)glycinamide + ADP + phosphate + H(+). It participates in purine metabolism; IMP biosynthesis via de novo pathway; N(2)-formyl-N(1)-(5-phospho-D-ribosyl)glycinamide from N(1)-(5-phospho-D-ribosyl)glycinamide (formate route): step 1/1. Involved in the de novo purine biosynthesis. Catalyzes the transfer of formate to 5-phospho-ribosyl-glycinamide (GAR), producing 5-phospho-ribosyl-N-formylglycinamide (FGAR). Formate is provided by PurU via hydrolysis of 10-formyl-tetrahydrofolate. This chain is Formate-dependent phosphoribosylglycinamide formyltransferase, found in Pseudomonas syringae pv. tomato (strain ATCC BAA-871 / DC3000).